The following is a 231-amino-acid chain: 7-cyano-7-deazaguanine synthase (231 aa).

L8 to A18 serves as a coordination point for ATP. Positions 189, 197, 200, and 203 each coordinate Zn(2+).

It belongs to the QueC family. Zn(2+) is required as a cofactor.

It carries out the reaction 7-carboxy-7-deazaguanine + NH4(+) + ATP = 7-cyano-7-deazaguanine + ADP + phosphate + H2O + H(+). The protein operates within purine metabolism; 7-cyano-7-deazaguanine biosynthesis. Functionally, catalyzes the ATP-dependent conversion of 7-carboxy-7-deazaguanine (CDG) to 7-cyano-7-deazaguanine (preQ(0)). The polypeptide is 7-cyano-7-deazaguanine synthase (Synechococcus elongatus (strain ATCC 33912 / PCC 7942 / FACHB-805) (Anacystis nidulans R2)).